The sequence spans 198 residues: Phosphoheptose isomerase (198 aa).

The SIS domain occupies 34–196 (IVEALIRGNK…DDSLFPADHG (163 aa)). 49 to 51 (NGG) lines the substrate pocket. Zn(2+) is bound by residues H58 and N62. Substrate contacts are provided by residues N62, 91-92 (ND), 117-119 (STS), S122, and Q172. Zn(2+) is bound by residues Q172 and H180.

Belongs to the SIS family. GmhA subfamily. As to quaternary structure, homotetramer. It depends on Zn(2+) as a cofactor.

It is found in the cytoplasm. The enzyme catalyses 2 D-sedoheptulose 7-phosphate = D-glycero-alpha-D-manno-heptose 7-phosphate + D-glycero-beta-D-manno-heptose 7-phosphate. Its pathway is carbohydrate biosynthesis; D-glycero-D-manno-heptose 7-phosphate biosynthesis; D-glycero-alpha-D-manno-heptose 7-phosphate and D-glycero-beta-D-manno-heptose 7-phosphate from sedoheptulose 7-phosphate: step 1/1. Catalyzes the isomerization of sedoheptulose 7-phosphate in D-glycero-D-manno-heptose 7-phosphate. The chain is Phosphoheptose isomerase from Alteromonas mediterranea (strain DSM 17117 / CIP 110805 / LMG 28347 / Deep ecotype).